Reading from the N-terminus, the 487-residue chain is Solute carrier family 22 member 15-like (487 aa).

The chain crosses the membrane as a helical span at residues 23–43 (FLTLLQIYVACQSMLIVLVGA). Asn-70 carries an N-linked (GlcNAc...) asparagine glycan. The next 11 helical transmembrane spans lie at 90–110 (LASS…GPLS), 117–137 (PVYL…ALAP), 141–161 (VFAV…LVSF), 178–198 (SLTN…GFYI), 203–223 (TLAF…FVLP), 286–306 (ILLM…TLNA), 315–335 (LNVA…LYFI), 345–365 (ATAG…FVPE), 374–394 (TVLA…VYIY), 408–428 (LGVC…IPAM), and 435–455 (MPFV…LLLP).

This sequence belongs to the major facilitator (TC 2.A.1) superfamily. Organic cation transporter (TC 2.A.1.19) family.

It localises to the membrane. Functionally, probably transports organic cations. The sequence is that of Solute carrier family 22 member 15-like (slc22a15b) from Xenopus laevis (African clawed frog).